Here is a 182-residue protein sequence, read N- to C-terminus: WUSCHEL-related homeobox 5 (182 aa).

Positions 1 to 24 are disordered; that stretch reads MSFSVKGRSLRGNNNGGTGTKCGR. The segment at residues 20–84 is a DNA-binding region (homeobox; WUS-type); sequence TKCGRWNPTV…NHKARERQKR (65 aa).

Belongs to the WUS homeobox family. Specifically expressed in the central cells of a quiescent center (QC) of the root.

Its subcellular location is the nucleus. Transcription factor, which may be involved in the specification and maintenance of the stem cells (QC cells) in the root apical meristem (RAM). This is WUSCHEL-related homeobox 5 (WOX5) from Arabidopsis thaliana (Mouse-ear cress).